The primary structure comprises 337 residues: MTKVFAYAIRKDEEPFLNEWKEAHKDIDVDYTDKLLTPETAKLAKGADGVVVYQQLDYTADTLQALADAGVTKMSLRNVGVDNIDMDKAKELGFQITNVPVYSPNAIAEHAAIQAARVLRQDKRMDEKMAKRDLRWAPTIGREVRDQVVGVVGTGHIGQVFMRIMEGFGAKVIAYDIFKNPELEKKGYYVDSLDDLYKQADVISLHVPDVPANVHMINDKSIAEMKDGVVIVNCSRGRLVDTDAVIRGLDSGKIFGFVMDTYEDEVGVFNKDWEGKEFPDKRLADLIDRPNVLVTPHTAFYTTHAVRNMVVKAFNNNLKLINGEKPDSPVALNKNKF.

NAD(+)-binding positions include 156–157, Asp-176, 207–208, Asn-213, 234–236, and Asp-260; these read HI, VP, and CSR. Residue Arg-236 is part of the active site. Glu-265 is a catalytic residue. His-297 acts as the Proton donor in catalysis.

The protein belongs to the D-isomer specific 2-hydroxyacid dehydrogenase family. Homodimer.

It catalyses the reaction (R)-lactate + NAD(+) = pyruvate + NADH + H(+). This is D-lactate dehydrogenase from Lactobacillus helveticus (Lactobacillus suntoryeus).